A 592-amino-acid polypeptide reads, in one-letter code: Coronatine-insensitive protein 1 (592 aa).

The F-box domain occupies 16 to 57; that stretch reads TVDDVIEQVMTYITDPKDRDSASLVCRRWFKIDSETREHVTM. 18 LRR repeats span residues 58-82, 83-102, 103-120, 121-154, 155-182, 183-210, 211-236, 237-264, 265-283, 284-308, 309-332, 333-368, 369-393, 394-426, 427-456, 457-478, 479-500, and 501-524; these read ALCY…KLKG, KPRA…YVTP, WVTE…VHFR, RMIV…FTTD, GLLS…KDGK, WLHE…ISPK, DLET…LELV, GFFK…EKYM, NLVF…MGPN, EMPI…LETE, DHCT…IGDR, GLEV…VSQR, GLIA…ITNE, SLES…PLDN, GVRS…LGLS, YIGQ…ESDE, GLME…GCCF, and SERA…QGYR. Residue arginine 85 participates in jasmonate binding. Jasmonate-binding residues include arginine 348, tyrosine 386, and arginine 409. Arginine 496 is a binding site for jasmonate.

As to quaternary structure, component of SCF(COI1) E3 ubiquitin ligase complexes at least composed of ASK1 or ASK2, CUL1, RBX1A or RBX1B and COI1. Interacts with ASK1 and ASK2, but separately. Also binds to ASK11 and ASK12. Interacts with RBCS-1B and HDA6. SCF complexes interact with the COP9 signalosome (CSN). Interacts with TIFY10A.

It functions in the pathway protein modification; protein ubiquitination. Its function is as follows. Required for jasmonate-regulated plant fertility and defense processes, and for coronatine and/or other elicitors perceptions/responses. Seems to not be required for meiosis. Required for the regulation of some genes induced by wounding, but not for all. Component of SCF(COI1) E3 ubiquitin ligase complexes, which may mediate the ubiquitination and subsequent proteasomal degradation of target proteins (probably including the ribulose bisphosphate carboxylase small chain 1B RBCS-1B and the histone deacetylase HDA6). These SCF complexes play crucial roles in regulating response to jasmonate, and their interactions with the COP9 signalosome (CSN) appear to be important for their activity. Interacts with TIFY10A and inositol pentakisphosphate to form a high-affinity jasmonates coreceptor. Involved in the regulation of plant gene expression during plant-pathogen interactions with Pseudomonas syringae and Alternaria brassicicola. This Arabidopsis thaliana (Mouse-ear cress) protein is Coronatine-insensitive protein 1 (COI1).